Here is a 548-residue protein sequence, read N- to C-terminus: Synaptic vesicle 2-related protein (548 aa).

Residues 1–87 (MEDDLFQLRH…GFGKFQWKLS (87 aa)) are Cytoplasmic-facing. Residues 88–108 (MLTGLAWMADAMEMMILSILA) form a helical membrane-spanning segment. Residues 109 to 119 (PQLHCEWRLPS) lie on the Vesicular side of the membrane. Residues 120 to 140 (WQVALLTSVVFIGMMASSSLW) traverse the membrane as a helical segment. At 141-156 (GNVSDQYGRRTGLKIS) the chain is on the cytoplasmic side. Residues 157–177 (VIWTLYYGILSAFAPVYSWIL) form a helical membrane-spanning segment. The Vesicular portion of the chain corresponds to 178–180 (VLR). A helical membrane pass occupies residues 181–201 (GLVGFGIGGVPQSVTLYAEFL). Over 202–209 (PMKSRAKC) the chain is Cytoplasmic. A helical transmembrane segment spans residues 210 to 230 (ILLIEIFWALGTVFEVLLAIF). Residues 231-238 (VMPTLGWR) are Vesicular-facing. The helical transmembrane segment at 239 to 259 (WLLILSALPLMLFAILCFWLP) threads the bilayer. At 260 to 316 (ESARYEVLSGNQEKALATLKRIATENGAPMPLGKLIVSRQEDRGKIRDLFSPQFRCT) the chain is on the cytoplasmic side. Residues 317–337 (TLLLWFIWFSNAFSYYGLVLL) form a helical membrane-spanning segment. At 338–373 (TTELFQAGDVCSISNQRKAVKPKCSLACEYLTVEDY) the chain is on the vesicular side. The helical transmembrane segment at 374–394 (TDLLWTTLSEFPGLLVTLWII) threads the bilayer. Residues 395–401 (DRVGRKK) lie on the Cytoplasmic side of the membrane. A helical membrane pass occupies residues 402-422 (TMAICFIIFSFSALLLFLCVG). Residues 423-424 (RN) are Vesicular-facing. A helical transmembrane segment spans residues 425-445 (VLTVFLFIARAFISGGFQAAY). Residues 446–457 (VYTPEVYPTATR) lie on the Cytoplasmic side of the membrane. The helical transmembrane segment at 458 to 478 (ALGLGTCSGMARVGALITPFI) threads the bilayer. The Vesicular portion of the chain corresponds to 479 to 486 (AQVMLESS). The helical transmembrane segment at 487–507 (IYLTVLVYSGCCVLAAVASCF) threads the bilayer. Topologically, residues 508 to 548 (LPIETKGRGLQESSHREWGQEMVGRGTHNVGATPSHSGSQE) are cytoplasmic. Positions 519 to 548 (ESSHREWGQEMVGRGTHNVGATPSHSGSQE) are disordered. The segment covering 537–548 (VGATPSHSGSQE) has biased composition (polar residues).

This sequence belongs to the major facilitator superfamily. In terms of tissue distribution, detected in embryonic trigeminal ganglion and spinal cord.

Its subcellular location is the cytoplasmic vesicle. The protein localises to the secretory vesicle. It localises to the synaptic vesicle membrane. This is Synaptic vesicle 2-related protein (svop) from Xenopus laevis (African clawed frog).